The sequence spans 367 residues: NADH-quinone oxidoreductase subunit D (367 aa).

It belongs to the complex I 49 kDa subunit family. As to quaternary structure, NDH-1 is composed of 14 different subunits. Subunits NuoB, C, D, E, F, and G constitute the peripheral sector of the complex.

The protein localises to the cell inner membrane. The enzyme catalyses a quinone + NADH + 5 H(+)(in) = a quinol + NAD(+) + 4 H(+)(out). In terms of biological role, NDH-1 shuttles electrons from NADH, via FMN and iron-sulfur (Fe-S) centers, to quinones in the respiratory chain. The immediate electron acceptor for the enzyme in this species is believed to be ubiquinone. Couples the redox reaction to proton translocation (for every two electrons transferred, four hydrogen ions are translocated across the cytoplasmic membrane), and thus conserves the redox energy in a proton gradient. This is NADH-quinone oxidoreductase subunit D from Thermosipho melanesiensis (strain DSM 12029 / CIP 104789 / BI429).